The primary structure comprises 205 residues: Glycerol-3-phosphate acyltransferase (205 aa).

5 consecutive transmembrane segments (helical) span residues 3–23 (VFAL…SAIL), 53–73 (GVAA…VWLA), 80–100 (PFYL…PVFF), 112–132 (LGAI…TWLL), and 138–158 (GYSS…VWWF).

It belongs to the PlsY family. Probably interacts with PlsX.

Its subcellular location is the cell inner membrane. The enzyme catalyses an acyl phosphate + sn-glycerol 3-phosphate = a 1-acyl-sn-glycero-3-phosphate + phosphate. The protein operates within lipid metabolism; phospholipid metabolism. Functionally, catalyzes the transfer of an acyl group from acyl-phosphate (acyl-PO(4)) to glycerol-3-phosphate (G3P) to form lysophosphatidic acid (LPA). This enzyme utilizes acyl-phosphate as fatty acyl donor, but not acyl-CoA or acyl-ACP. This Erwinia tasmaniensis (strain DSM 17950 / CFBP 7177 / CIP 109463 / NCPPB 4357 / Et1/99) protein is Glycerol-3-phosphate acyltransferase.